Reading from the N-terminus, the 185-residue chain is Elongation factor P (185 aa).

The protein belongs to the elongation factor P family.

It is found in the cytoplasm. Its pathway is protein biosynthesis; polypeptide chain elongation. Involved in peptide bond synthesis. Stimulates efficient translation and peptide-bond synthesis on native or reconstituted 70S ribosomes in vitro. Probably functions indirectly by altering the affinity of the ribosome for aminoacyl-tRNA, thus increasing their reactivity as acceptors for peptidyl transferase. This chain is Elongation factor P, found in Deinococcus radiodurans (strain ATCC 13939 / DSM 20539 / JCM 16871 / CCUG 27074 / LMG 4051 / NBRC 15346 / NCIMB 9279 / VKM B-1422 / R1).